The following is a 311-amino-acid chain: MKKIYIILLILFVILISLIGASILLVMSLSGENVDLFGGEKIAKVYLCNEIYFDYNQGDGIFPQQKKDARYYINLLDDLEKDDSVKGVLLVVNSPGGEVIASEKLARKVEELAKKKPVVVYVEGLDASGAYMVSAPADYIVAEKHSIVGSIGVRMDLMHYYGLMKKLGINVTTIKAGKYKDIGSPFRPMTKEEKEYLQKMINETYMDFVKWVAEHRHLSINYTLKIADGKIYSGEDAKKVGLVDEVGTEEDALKKLEQLANVSNPEIVEYGLEENKGLFGLTYYLGYGIGKGIGEVLYGMEKINGRVELLS.

Catalysis depends on Ser-128, which acts as the Nucleophile. Lys-180 (proton donor/acceptor) is an active-site residue.

Belongs to the peptidase S49 family.

This chain is Putative protease MJ0651, found in Methanocaldococcus jannaschii (strain ATCC 43067 / DSM 2661 / JAL-1 / JCM 10045 / NBRC 100440) (Methanococcus jannaschii).